The sequence spans 279 residues: Histone chaperone ASF1 (279 aa).

Residues 1-143 are interaction with HIR1; it reads MSIVSLLGIK…HIVRNILAEK (143 aa). Positions 1–155 are interaction with histone H3, histone H4, RAD53 and the RF-C complex; the sequence is MSIVSLLGIK…VTRFNIVWDN (155 aa). Residues 156–279 are disordered; sequence ENEGDLYPPE…TPKDAARSTN (124 aa). A compositionally biased stretch (acidic residues) spans 168 to 244; sequence GVDDEEEEDD…DEEEGEEEVG (77 aa). Residues 192–243 are a coiled coil; sequence DDQEDGEGEAEEAAEEEEEEEEKTEDNETNLEEEEEDIENSDGDEEEGEEEV. 2 stretches are compositionally biased toward basic and acidic residues: residues 245–254 and 269–279; these read SVDKNEDGND and STPKDAARSTN.

The protein belongs to the ASF1 family. In terms of assembly, interacts with histone H3/H4 heterodimers via both histone H3 and histone H4. Binds with higher affinity to H3/H4 heterodimers where histone H3 has been pre-acetylated on 'Lys-14'. Interacts with RAD53 and this may impair interaction with histones and chromatin assembly; the interaction is reduced upon activation of DNA damage or replication checkpoints which in turn promotes histone binding and chromatin assembly. Interacts with the CAC2 subunit of chromatin assembly factor 1 (CAF-1). Interacts with the HIR1, HIR2, HIR3 and HPC2 subunits of the HIR complex. Interacts with the RFC1, RFC2, RFC3, RFC4 and RFC5 subunits of the replication factor C (RF-C/RFC) complex; which may recruit this protein to DNA. Interacts with the SAS2, SAS4 and SAS5 subunits of the SAS/SAS-I complex. Interacts with the BDF1, BDF2, SPT15, TAF1 and TAF7 subunits of the TFIID complex. Interacts with RTT109 and VPS75; the interaction with RTT109 is direct.

The protein localises to the nucleus. In terms of biological role, histone chaperone that facilitates histone deposition and histone exchange and removal during nucleosome assembly and disassembly. Facilitates histone deposition through both replication-dependent and replication-independent chromatin assembly pathways. Cooperates with chromatin assembly factor 1 (CAF-1) to promote replication-dependent chromatin assembly and with the HIR complex to promote replication-independent chromatin assembly, which may occur during transcription and DNA repair. May be required for the maintenance of a subset of replication elongation factors, including DNA polymerase epsilon, the RFC complex and PCNA, at stalled replication forks. Also required for RTT109-dependent acetylation of histone H3 on 'Lys-9' and 'Lys-56'. Promotion of RTT109-mediated histone H3 'Lys-56' acetylation is dependent on interactions with histone H3 pre-acetylated on 'Lys-14'. The polypeptide is Histone chaperone ASF1 (Saccharomyces cerevisiae (strain ATCC 204508 / S288c) (Baker's yeast)).